Here is a 473-residue protein sequence, read N- to C-terminus: Ral-GDS-related protein (473 aa).

Residues 117–215 (EPNEAKPDDP…NQPSEELPDM (99 aa)) are disordered. A compositionally biased stretch (low complexity) spans 134–157 (ALTMPALEPAPPLLADLGPALEPE). Over residues 173–185 (GPAPAPGEGPPPG) the composition is skewed to pro residues. One can recognise a Ras-GEF domain in the interval 219-471 (PPRLLAEQLT…YKLSCQLEPE (253 aa)).

It is found in the cytoplasmic vesicle. The polypeptide is Ral-GDS-related protein (RGL4) (Homo sapiens (Human)).